Consider the following 125-residue polypeptide: MITMKIIKTEYDKIKPYITKDGSIIRELLHPNIYKGVKQSLAEAIVPVGSKTLLHKHYTSEEIYYILEGRGLMTLDNEKFEVKKGDTIYIPPKTPHKIENIGNVPLKILCCSYPPYSHEDTEILE.

Residues 45–110 (IVPVGSKTLL…IGNVPLKILC (66 aa)) enclose the Cupin type-2 domain.

This is an uncharacterized protein from Methanocaldococcus jannaschii (strain ATCC 43067 / DSM 2661 / JAL-1 / JCM 10045 / NBRC 100440) (Methanococcus jannaschii).